A 669-amino-acid polypeptide reads, in one-letter code: Threonine--tRNA ligase (669 aa).

A TGS domain is found at Asp-3 to Thr-60. The segment at Asp-260 to Pro-566 is catalytic. Residues Cys-365, His-416, and His-543 each coordinate Zn(2+).

It belongs to the class-II aminoacyl-tRNA synthetase family. In terms of assembly, homodimer. Zn(2+) serves as cofactor.

The protein localises to the cytoplasm. It carries out the reaction tRNA(Thr) + L-threonine + ATP = L-threonyl-tRNA(Thr) + AMP + diphosphate + H(+). Its function is as follows. Catalyzes the attachment of threonine to tRNA(Thr) in a two-step reaction: L-threonine is first activated by ATP to form Thr-AMP and then transferred to the acceptor end of tRNA(Thr). Also edits incorrectly charged L-seryl-tRNA(Thr). The polypeptide is Threonine--tRNA ligase (Pseudarthrobacter chlorophenolicus (strain ATCC 700700 / DSM 12829 / CIP 107037 / JCM 12360 / KCTC 9906 / NCIMB 13794 / A6) (Arthrobacter chlorophenolicus)).